The sequence spans 375 residues: Meiotic driver cw27 (375 aa).

Disordered regions lie at residues 1–42 (MKNK…STLP) and 74–103 (DYDE…GTTD). A compositionally biased stretch (basic and acidic residues) spans 11–29 (SMDELSTKNDNEIDLEKGP). A run of 7 helical transmembrane segments spans residues 108-128 (FLIK…PAVC), 145-165 (WTLI…SWCF), 172-192 (AVKV…ISLA), 208-228 (EMMI…FGCV), 245-265 (TISA…WTLW), 272-292 (LQVL…MSLF), and 336-356 (VIGF…NAIG).

Belongs to the WTF family. Homomer. Forms protein aggregates. The two isoforms can interact with each other and with themselves. High sequence similarity is required for their interaction.

It localises to the spore membrane. Its subcellular location is the vacuole. It is found in the membrane. The protein resides in the ascus epiplasm. The protein localises to the cytoplasm. It localises to the endoplasmic reticulum. In terms of biological role, promotes unequal transmission of alleles from the parental zygote to progeny spores by acting as poison/antidote system where the poison and antidote proteins are produced from the same locus; the poison component is trans-acting and targets all spores within an ascus whereas the antidote component is spore-specific, leading to poisoning of all progeny that do not inherit the allele. Its function is as follows. Localizes isoform 2 to the vacuole thereby facilitating its degradation. Functionally, forms toxic aggregates that disrupt spore maturation. The protein is Meiotic driver cw27 of Schizosaccharomyces pombe (Fission yeast).